A 499-amino-acid polypeptide reads, in one-letter code: Probable cytosol aminopeptidase (499 aa).

The Mn(2+) site is built by K271 and D276. K283 is an active-site residue. 3 residues coordinate Mn(2+): D294, D353, and E355. R357 is a catalytic residue.

This sequence belongs to the peptidase M17 family. The cofactor is Mn(2+).

It is found in the cytoplasm. It carries out the reaction Release of an N-terminal amino acid, Xaa-|-Yaa-, in which Xaa is preferably Leu, but may be other amino acids including Pro although not Arg or Lys, and Yaa may be Pro. Amino acid amides and methyl esters are also readily hydrolyzed, but rates on arylamides are exceedingly low.. The catalysed reaction is Release of an N-terminal amino acid, preferentially leucine, but not glutamic or aspartic acids.. In terms of biological role, presumably involved in the processing and regular turnover of intracellular proteins. Catalyzes the removal of unsubstituted N-terminal amino acids from various peptides. The protein is Probable cytosol aminopeptidase of Bordetella bronchiseptica (strain ATCC BAA-588 / NCTC 13252 / RB50) (Alcaligenes bronchisepticus).